The following is a 227-amino-acid chain: MAYPMQLGFQDATSPIMEELLHFHDHTLMIVFLISSLVLYVISLMLTTKLTHTSTMDAQEVETIWTILPAIILILIALPSLRILYMMDEINNPSLTVKTMGHQWYWSYEYTDYEDLSFDSYMIPTSELKPGELRLLEVDNRVVLPMEMTIRMLVSSEDVLHSWAVPSLGLKTDAIPGRLNQTTLMSTRPGLYYGQCSEICGSNHSFMPIVLELVPLNYFEKWSASML.

Residues 1–14 (MAYPMQLGFQDATS) lie on the Mitochondrial intermembrane side of the membrane. Residues 15–45 (PIMEELLHFHDHTLMIVFLISSLVLYVISLM) form a helical membrane-spanning segment. The Mitochondrial matrix portion of the chain corresponds to 46-59 (LTTKLTHTSTMDAQ). A helical membrane pass occupies residues 60–87 (EVETIWTILPAIILILIALPSLRILYMM). Residues 88-227 (DEINNPSLTV…YFEKWSASML (140 aa)) are Mitochondrial intermembrane-facing. Histidine 161, cysteine 196, glutamate 198, cysteine 200, histidine 204, and methionine 207 together coordinate Cu cation. Residue glutamate 198 coordinates Mg(2+). Tyrosine 218 carries the phosphotyrosine modification.

This sequence belongs to the cytochrome c oxidase subunit 2 family. As to quaternary structure, component of the cytochrome c oxidase (complex IV, CIV), a multisubunit enzyme composed of 14 subunits. The complex is composed of a catalytic core of 3 subunits MT-CO1, MT-CO2 and MT-CO3, encoded in the mitochondrial DNA, and 11 supernumerary subunits COX4I, COX5A, COX5B, COX6A, COX6B, COX6C, COX7A, COX7B, COX7C, COX8 and NDUFA4, which are encoded in the nuclear genome. The complex exists as a monomer or a dimer and forms supercomplexes (SCs) in the inner mitochondrial membrane with NADH-ubiquinone oxidoreductase (complex I, CI) and ubiquinol-cytochrome c oxidoreductase (cytochrome b-c1 complex, complex III, CIII), resulting in different assemblies (supercomplex SCI(1)III(2)IV(1) and megacomplex MCI(2)III(2)IV(2)). Found in a complex with TMEM177, COA6, COX18, COX20, SCO1 and SCO2. Interacts with TMEM177 in a COX20-dependent manner. Interacts with COX20. Interacts with COX16. Cu cation serves as cofactor.

It is found in the mitochondrion inner membrane. It catalyses the reaction 4 Fe(II)-[cytochrome c] + O2 + 8 H(+)(in) = 4 Fe(III)-[cytochrome c] + 2 H2O + 4 H(+)(out). Functionally, component of the cytochrome c oxidase, the last enzyme in the mitochondrial electron transport chain which drives oxidative phosphorylation. The respiratory chain contains 3 multisubunit complexes succinate dehydrogenase (complex II, CII), ubiquinol-cytochrome c oxidoreductase (cytochrome b-c1 complex, complex III, CIII) and cytochrome c oxidase (complex IV, CIV), that cooperate to transfer electrons derived from NADH and succinate to molecular oxygen, creating an electrochemical gradient over the inner membrane that drives transmembrane transport and the ATP synthase. Cytochrome c oxidase is the component of the respiratory chain that catalyzes the reduction of oxygen to water. Electrons originating from reduced cytochrome c in the intermembrane space (IMS) are transferred via the dinuclear copper A center (CU(A)) of subunit 2 and heme A of subunit 1 to the active site in subunit 1, a binuclear center (BNC) formed by heme A3 and copper B (CU(B)). The BNC reduces molecular oxygen to 2 water molecules using 4 electrons from cytochrome c in the IMS and 4 protons from the mitochondrial matrix. This chain is Cytochrome c oxidase subunit 2 (MT-CO2), found in Rusa unicolor (Sambar).